Consider the following 419-residue polypeptide: UDP-N-acetylglucosamine 1-carboxyvinyltransferase (419 aa).

Position 22-23 (22-23) interacts with phosphoenolpyruvate; the sequence is KN. Residue arginine 92 coordinates UDP-N-acetyl-alpha-D-glucosamine. The active-site Proton donor is the cysteine 116. Position 116 is a 2-(S-cysteinyl)pyruvic acid O-phosphothioketal (cysteine 116). UDP-N-acetyl-alpha-D-glucosamine is bound by residues 121-125, aspartate 306, and isoleucine 328; that span reads RPVDQ.

The protein belongs to the EPSP synthase family. MurA subfamily.

It localises to the cytoplasm. The enzyme catalyses phosphoenolpyruvate + UDP-N-acetyl-alpha-D-glucosamine = UDP-N-acetyl-3-O-(1-carboxyvinyl)-alpha-D-glucosamine + phosphate. Its pathway is cell wall biogenesis; peptidoglycan biosynthesis. Functionally, cell wall formation. Adds enolpyruvyl to UDP-N-acetylglucosamine. Target for the antibiotic phosphomycin. This chain is UDP-N-acetylglucosamine 1-carboxyvinyltransferase, found in Acinetobacter guillouiae (Acinetobacter genomosp. 11).